The following is a 327-amino-acid chain: DNA-directed RNA polymerase subunit alpha (327 aa).

The interval 1–233 is alpha N-terminal domain (alpha-NTD); it reads MQNSASEFLK…DQLSIFADLQ (233 aa). The interval 247 to 327 is alpha C-terminal domain (alpha-CTD); that stretch reads IDPILLRPVD…NWPPAGLEKP (81 aa).

The protein belongs to the RNA polymerase alpha chain family. In terms of assembly, homodimer. The RNAP catalytic core consists of 2 alpha, 1 beta, 1 beta' and 1 omega subunit. When a sigma factor is associated with the core the holoenzyme is formed, which can initiate transcription.

It carries out the reaction RNA(n) + a ribonucleoside 5'-triphosphate = RNA(n+1) + diphosphate. DNA-dependent RNA polymerase catalyzes the transcription of DNA into RNA using the four ribonucleoside triphosphates as substrates. In Chromobacterium violaceum (strain ATCC 12472 / DSM 30191 / JCM 1249 / CCUG 213 / NBRC 12614 / NCIMB 9131 / NCTC 9757 / MK), this protein is DNA-directed RNA polymerase subunit alpha.